We begin with the raw amino-acid sequence, 258 residues long: Imidazole glycerol phosphate synthase subunit HisF (258 aa).

Active-site residues include Asp-11 and Asp-130.

The protein belongs to the HisA/HisF family. Heterodimer of HisH and HisF.

The protein localises to the cytoplasm. It catalyses the reaction 5-[(5-phospho-1-deoxy-D-ribulos-1-ylimino)methylamino]-1-(5-phospho-beta-D-ribosyl)imidazole-4-carboxamide + L-glutamine = D-erythro-1-(imidazol-4-yl)glycerol 3-phosphate + 5-amino-1-(5-phospho-beta-D-ribosyl)imidazole-4-carboxamide + L-glutamate + H(+). Its pathway is amino-acid biosynthesis; L-histidine biosynthesis; L-histidine from 5-phospho-alpha-D-ribose 1-diphosphate: step 5/9. Functionally, IGPS catalyzes the conversion of PRFAR and glutamine to IGP, AICAR and glutamate. The HisF subunit catalyzes the cyclization activity that produces IGP and AICAR from PRFAR using the ammonia provided by the HisH subunit. This chain is Imidazole glycerol phosphate synthase subunit HisF, found in Escherichia coli O17:K52:H18 (strain UMN026 / ExPEC).